A 905-amino-acid chain; its full sequence is Coatomer subunit beta' (905 aa).

WD repeat units lie at residues Ala-13–Thr-52, Val-55–Met-94, Ala-97–Gln-136, Gly-140–Thr-180, Gly-183–Thr-224, Gly-227–Thr-266, Ser-350–Phe-388, and Ser-390–Lys-425. An N6-acetyllysine modification is found at Lys-627. A WD 9 repeat occupies Ile-746–Lys-783. Residues Glu-837 to Glu-873 are disordered. Ser-859 carries the phosphoserine modification. Residues Gln-867–Ile-891 adopt a coiled-coil conformation.

This sequence belongs to the WD repeat COPB2 family. In terms of assembly, oligomeric complex that consists of at least the alpha, beta, beta', gamma, delta, epsilon and zeta subunits. Probably interacts with PEX11A. Interacts with SCYL1. Interacts with JAGN1.

Its subcellular location is the cytoplasm. It is found in the cytosol. The protein resides in the golgi apparatus membrane. The protein localises to the cytoplasmic vesicle. It localises to the COPI-coated vesicle membrane. Its function is as follows. The coatomer is a cytosolic protein complex that binds to dilysine motifs and reversibly associates with Golgi non-clathrin-coated vesicles, which further mediate biosynthetic protein transport from the ER, via the Golgi up to the trans Golgi network. Coatomer complex is required for budding from Golgi membranes, and is essential for the retrograde Golgi-to-ER transport of dilysine-tagged proteins. In mammals, the coatomer can only be recruited by membranes associated to ADP-ribosylation factors (ARFs), which are small GTP-binding proteins; the complex also influences the Golgi structural integrity, as well as the processing, activity, and endocytic recycling of LDL receptors. Functionally, this coatomer complex protein, essential for Golgi budding and vesicular trafficking, is a selective binding protein (RACK) for protein kinase C, epsilon type. It binds to Golgi membranes in a GTP-dependent manner. This Mus musculus (Mouse) protein is Coatomer subunit beta' (Copb2).